The sequence spans 647 residues: Probable potassium transport system protein Kup (647 aa).

13 helical membrane passes run 32 to 52, 74 to 94, 124 to 144, 166 to 186, 193 to 213, 230 to 250, 271 to 291, 300 to 320, 322 to 342, 361 to 381, 390 to 410, 418 to 438, and 443 to 463; these read IALM…SPLY, VISM…VLFV, LLII…AIIT, FVLP…KTGT, FGPI…HQVI, FLIE…LVLT, WFFI…AMFL, PFFL…ATAA, VIAS…AILL, IYMP…VLAF, AYGI…AIVM, TILV…FLTA, and IMEG…FLMT.

It belongs to the HAK/KUP transporter (TC 2.A.72) family.

It localises to the cell inner membrane. The catalysed reaction is K(+)(in) + H(+)(in) = K(+)(out) + H(+)(out). Its function is as follows. Transport of potassium into the cell. Likely operates as a K(+):H(+) symporter. The sequence is that of Probable potassium transport system protein Kup from Polynucleobacter asymbioticus (strain DSM 18221 / CIP 109841 / QLW-P1DMWA-1) (Polynucleobacter necessarius subsp. asymbioticus).